A 103-amino-acid chain; its full sequence is Cell division protein FtsB (103 aa).

The Cytoplasmic segment spans residues 1–3; the sequence is MGK. Residues 4–21 form a helical membrane-spanning segment; that stretch reads LTLLLLALLVWLQYSLWF. The Periplasmic portion of the chain corresponds to 22–103; that stretch reads GKNGIHDYSR…RAQTAGQNNR (82 aa). Residues 33-62 are a coiled coil; it reads NDDVVAQQATNAKLKARNDQLFAEIDDLNG.

Belongs to the FtsB family. Part of a complex composed of FtsB, FtsL and FtsQ.

Its subcellular location is the cell inner membrane. Essential cell division protein. May link together the upstream cell division proteins, which are predominantly cytoplasmic, with the downstream cell division proteins, which are predominantly periplasmic. The protein is Cell division protein FtsB of Salmonella arizonae (strain ATCC BAA-731 / CDC346-86 / RSK2980).